The primary structure comprises 616 residues: Dihydroxy-acid dehydratase (616 aa).

Position 81 (aspartate 81) interacts with Mg(2+). Cysteine 122 lines the [2Fe-2S] cluster pocket. 2 residues coordinate Mg(2+): aspartate 123 and lysine 124. At lysine 124 the chain carries N6-carboxylysine. Cysteine 195 contributes to the [2Fe-2S] cluster binding site. Glutamate 491 contributes to the Mg(2+) binding site. Serine 517 acts as the Proton acceptor in catalysis.

Belongs to the IlvD/Edd family. Homodimer. [2Fe-2S] cluster serves as cofactor. Mg(2+) is required as a cofactor.

The enzyme catalyses (2R)-2,3-dihydroxy-3-methylbutanoate = 3-methyl-2-oxobutanoate + H2O. It carries out the reaction (2R,3R)-2,3-dihydroxy-3-methylpentanoate = (S)-3-methyl-2-oxopentanoate + H2O. The protein operates within amino-acid biosynthesis; L-isoleucine biosynthesis; L-isoleucine from 2-oxobutanoate: step 3/4. It participates in amino-acid biosynthesis; L-valine biosynthesis; L-valine from pyruvate: step 3/4. Functionally, functions in the biosynthesis of branched-chain amino acids. Catalyzes the dehydration of (2R,3R)-2,3-dihydroxy-3-methylpentanoate (2,3-dihydroxy-3-methylvalerate) into 2-oxo-3-methylpentanoate (2-oxo-3-methylvalerate) and of (2R)-2,3-dihydroxy-3-methylbutanoate (2,3-dihydroxyisovalerate) into 2-oxo-3-methylbutanoate (2-oxoisovalerate), the penultimate precursor to L-isoleucine and L-valine, respectively. This chain is Dihydroxy-acid dehydratase, found in Escherichia coli O9:H4 (strain HS).